A 297-amino-acid polypeptide reads, in one-letter code: 33 kDa chaperonin (297 aa).

Intrachain disulfides connect Cys-232–Cys-234 and Cys-266–Cys-269.

The protein belongs to the HSP33 family. In terms of processing, under oxidizing conditions two disulfide bonds are formed involving the reactive cysteines. Under reducing conditions zinc is bound to the reactive cysteines and the protein is inactive.

The protein localises to the cytoplasm. In terms of biological role, redox regulated molecular chaperone. Protects both thermally unfolding and oxidatively damaged proteins from irreversible aggregation. Plays an important role in the bacterial defense system toward oxidative stress. In Pseudomonas aeruginosa (strain LESB58), this protein is 33 kDa chaperonin.